The sequence spans 470 residues: DNA primase large subunit (470 aa).

The [4Fe-4S] cluster site is built by cysteine 279, cysteine 358, cysteine 376, and cysteine 414. Residues 449 to 470 (EEKKSAKQSNNKENENQSIDEK) are disordered.

Belongs to the eukaryotic-type primase large subunit family. As to quaternary structure, heterodimer of a small subunit and a large subunit. [4Fe-4S] cluster serves as cofactor.

Its function is as follows. DNA primase is the polymerase that synthesizes small RNA primers for the Okazaki fragments made during discontinuous DNA replication. The sequence is that of DNA primase large subunit (prim2) from Dictyostelium discoideum (Social amoeba).